A 288-amino-acid chain; its full sequence is tRNA-cytidine(32) 2-sulfurtransferase (288 aa).

Positions 70–75 (SGGKDS) match the PP-loop motif motif. Cys145, Cys148, and Cys236 together coordinate [4Fe-4S] cluster.

Belongs to the TtcA family. In terms of assembly, homodimer. Mg(2+) is required as a cofactor. The cofactor is [4Fe-4S] cluster.

It is found in the cytoplasm. The catalysed reaction is cytidine(32) in tRNA + S-sulfanyl-L-cysteinyl-[cysteine desulfurase] + AH2 + ATP = 2-thiocytidine(32) in tRNA + L-cysteinyl-[cysteine desulfurase] + A + AMP + diphosphate + H(+). The protein operates within tRNA modification. Its function is as follows. Catalyzes the ATP-dependent 2-thiolation of cytidine in position 32 of tRNA, to form 2-thiocytidine (s(2)C32). The sulfur atoms are provided by the cysteine/cysteine desulfurase (IscS) system. This is tRNA-cytidine(32) 2-sulfurtransferase from Bartonella tribocorum (strain CIP 105476 / IBS 506).